The sequence spans 708 residues: Polyribonucleotide nucleotidyltransferase (708 aa).

Mg(2+) contacts are provided by aspartate 488 and aspartate 494. The region spanning 555–615 (PIIKVTKVDP…ENVDKAIELI (61 aa)) is the KH domain. An S1 motif domain is found at 625–692 (GEVLEGKVTR…DLGRLQFKRV (68 aa)).

This sequence belongs to the polyribonucleotide nucleotidyltransferase family. The cofactor is Mg(2+).

Its subcellular location is the cytoplasm. The enzyme catalyses RNA(n+1) + phosphate = RNA(n) + a ribonucleoside 5'-diphosphate. Involved in mRNA degradation. Catalyzes the phosphorolysis of single-stranded polyribonucleotides processively in the 3'- to 5'-direction. The chain is Polyribonucleotide nucleotidyltransferase from Thermotoga petrophila (strain ATCC BAA-488 / DSM 13995 / JCM 10881 / RKU-1).